The primary structure comprises 209 residues: Uracil phosphoribosyltransferase (209 aa).

5-phospho-alpha-D-ribose 1-diphosphate-binding positions include R79, R104, and 131–139 (DPMLATGGS). Residues I194 and 199–201 (GDA) each bind uracil. 5-phospho-alpha-D-ribose 1-diphosphate is bound at residue D200.

Belongs to the UPRTase family. Mg(2+) serves as cofactor.

It carries out the reaction UMP + diphosphate = 5-phospho-alpha-D-ribose 1-diphosphate + uracil. It functions in the pathway pyrimidine metabolism; UMP biosynthesis via salvage pathway; UMP from uracil: step 1/1. Allosterically activated by GTP. Catalyzes the conversion of uracil and 5-phospho-alpha-D-ribose 1-diphosphate (PRPP) to UMP and diphosphate. The chain is Uracil phosphoribosyltransferase from Desulfitobacterium hafniense (strain DSM 10664 / DCB-2).